The following is a 1086-amino-acid chain: Sterol regulatory element-binding protein cleavage-activating protein (1086 aa).

At 1–35 (MRIFTLGKGRISRGYARQVNPSLFAKYSYCIANNP) the chain is on the cytoplasmic side. A helical membrane pass occupies residues 36 to 56 (WYFILVFTLLSITGIYSSLVA). The Lumenal segment spans residues 57–229 (YQQSLYDQSL…TVVARIPDLT (173 aa)). Residues Asn-94 and Asn-168 are each glycosylated (N-linked (GlcNAc...) asparagine). A helical membrane pass occupies residues 230 to 250 (VIYRWYLWVGFGVGLFAYLYL). In terms of domain architecture, SSD spans 233-391 (RWYLWVGFGV…GSFFLAVLSV (159 aa)). The Cytoplasmic portion of the chain corresponds to 251–265 (SLVRLHDIRAKFGLT). Residues 266–286 (ATIFIQSGTAYFSTCSLLYFF) form a helical membrane-spanning segment. Residues 287-290 (ERTG) are Lumenal-facing. A helical transmembrane segment spans residues 291-311 (PICPWPMAYYIIIFMDIENSF). The Cytoplasmic segment spans residues 312-337 (RLLRAVIASPQTKRVPSRIMEGFSST). Residues 338 to 358 (IIASFSSLLKKLLTLFVLSFF) form a helical membrane-spanning segment. At 359–367 (VYPLVQEFC) the chain is on the lumenal side. Residues 368-388 (LFLACSFVVSFLLHGSFFLAV) form a helical membrane-spanning segment. Over 389–422 (LSVDIRRLELQDFLDSNSSNRNSKWWVPYLEYVR) the chain is Cytoplasmic. An ER export signal motif is present at residues 396 to 401 (LELQDF). The chain crosses the membrane as a helical span at residues 423–443 (FMWSPWIIDNLGTVSFHMYVI). The Lumenal portion of the chain corresponds to 444–544 (YLQLQSSTDI…FHDRRVWRWS (101 aa)). A glycan (N-linked (GlcNAc...) asparagine) is linked at Asn-454. A helical transmembrane segment spans residues 545 to 565 (TFFSILFAIDFAVGLLVKALL). The Cytoplasmic portion of the chain corresponds to 566–1086 (RGWSDHDELS…QRKRSGTIGC (521 aa)). WD repeat units follow at residues 593 to 632 (HHQL…TKLV), 637 to 675 (QMPR…LMLQ), 680 to 727 (CKPN…EGAD), 736 to 776 (LSSP…WSPK), and 963 to 1009 (GHYN…KKHR). An interaction with sre1 region spans residues 640-1086 (RTLKAIALDP…QRKRSGTIGC (447 aa)).

The protein belongs to the WD repeat SCAP family. In terms of assembly, forms a tight complex with scp1, composed of 4 copies of scp1 and 4 copies of sre1.

The protein resides in the endoplasmic reticulum membrane. It localises to the golgi apparatus membrane. Its function is as follows. Escort protein required for sre1 processing at low sterol as well as oxygen levels. May regulate export of the scp1/sre1 complex from the ER at low sterol or oxygen levels. 4-methyl sterols bound to scp1 may mask an ER export signal in scp1 leading to retention of the complex in the ER. Release of 4-methyl sterols may trigger a conformational change in the SSD domain of scp1 unmasking the ER export signal leading to recruitment into COPII-coated vesicles, transport to the Golgi complex, proteolytic cleavage of sre1 in the Golgi, release of the transcription factor fragment of sre1 from the membrane, its import into the nucleus and up-regulation of genes required for ergosterol biosynthesis as well as anaerobic growth. Binds 4-methyl sterols. The polypeptide is Sterol regulatory element-binding protein cleavage-activating protein (Schizosaccharomyces pombe (strain 972 / ATCC 24843) (Fission yeast)).